Reading from the N-terminus, the 189-residue chain is Peptidyl-tRNA hydrolase (189 aa).

Position 15 (Tyr15) interacts with tRNA. Residue His20 is the Proton acceptor of the active site. The tRNA site is built by Tyr64, Asn66, and Asn112.

It belongs to the PTH family. As to quaternary structure, monomer.

The protein localises to the cytoplasm. It carries out the reaction an N-acyl-L-alpha-aminoacyl-tRNA + H2O = an N-acyl-L-amino acid + a tRNA + H(+). In terms of biological role, hydrolyzes ribosome-free peptidyl-tRNAs (with 1 or more amino acids incorporated), which drop off the ribosome during protein synthesis, or as a result of ribosome stalling. Its function is as follows. Catalyzes the release of premature peptidyl moieties from peptidyl-tRNA molecules trapped in stalled 50S ribosomal subunits, and thus maintains levels of free tRNAs and 50S ribosomes. The protein is Peptidyl-tRNA hydrolase of Sulfurihydrogenibium sp. (strain YO3AOP1).